The chain runs to 370 residues: Sphingolipid delta(4)-desaturase (370 aa).

Transmembrane regions (helical) follow at residues 68-88 (VMGV…TPVF), 92-112 (FLTL…LAIH), and 128-148 (LFAV…FQPY). Positions 112-116 (HELSH) match the Histidine box-1 motif. The short motif at 149 to 153 (HQLHH) is the Histidine box-2 element. 3 helical membrane-spanning segments follow: residues 173 to 193 (FLSS…FYAL), 197 to 217 (FITQ…QLIF), and 220 to 240 (VMVT…TFLA). The Histidine box-3 motif lies at 299–303 (HNEHH).

This sequence belongs to the fatty acid desaturase type 1 family. DEGS subfamily.

It localises to the membrane. The enzyme catalyses an N-acylsphinganine + 2 Fe(II)-[cytochrome b5] + O2 + 2 H(+) = an N-acylsphing-4-enine + 2 Fe(III)-[cytochrome b5] + 2 H2O. It functions in the pathway lipid metabolism; sphingolipid metabolism. In terms of biological role, delta(4)-fatty-acid desaturase which introduces a double bond at the 4-position in the long-chain base (LCB) of ceramides. Required for the formation of the monounsaturated sphingoid base (E)-sphing-4-enine during glucosylceramide (GluCer) biosynthesis. The sequence is that of Sphingolipid delta(4)-desaturase from Candida albicans (strain SC5314 / ATCC MYA-2876) (Yeast).